Here is a 233-residue protein sequence, read N- to C-terminus: Large ribosomal subunit protein uL1 (233 aa).

The protein belongs to the universal ribosomal protein uL1 family. In terms of assembly, part of the 50S ribosomal subunit.

Functionally, binds directly to 23S rRNA. The L1 stalk is quite mobile in the ribosome, and is involved in E site tRNA release. Its function is as follows. Protein L1 is also a translational repressor protein, it controls the translation of the L11 operon by binding to its mRNA. The chain is Large ribosomal subunit protein uL1 from Psychrobacter cryohalolentis (strain ATCC BAA-1226 / DSM 17306 / VKM B-2378 / K5).